Consider the following 183-residue polypeptide: uncharacterized protein (183 aa).

The Macro domain occupies 1–182 (MIKVVKGDIT…KALKIVGQGG (182 aa)).

This is an uncharacterized protein from Pyrococcus furiosus (strain ATCC 43587 / DSM 3638 / JCM 8422 / Vc1).